The sequence spans 298 residues: ATP synthase gamma chain (298 aa).

It belongs to the ATPase gamma chain family. As to quaternary structure, F-type ATPases have 2 components, CF(1) - the catalytic core - and CF(0) - the membrane proton channel. CF(1) has five subunits: alpha(3), beta(3), gamma(1), delta(1), epsilon(1). CF(0) has three main subunits: a, b and c.

Its subcellular location is the cell inner membrane. Its function is as follows. Produces ATP from ADP in the presence of a proton gradient across the membrane. The gamma chain is believed to be important in regulating ATPase activity and the flow of protons through the CF(0) complex. The chain is ATP synthase gamma chain from Bacteroides thetaiotaomicron (strain ATCC 29148 / DSM 2079 / JCM 5827 / CCUG 10774 / NCTC 10582 / VPI-5482 / E50).